A 414-amino-acid polypeptide reads, in one-letter code: Secreted beta-glucosidase sun1 (414 aa).

Positions Met1–Ala19 are cleaved as a signal peptide. N-linked (GlcNAc...) asparagine glycosylation occurs at Asn80. Positions Thr115–Thr140 are enriched in low complexity. The disordered stretch occupies residues Thr115–Gly141. Asn377 carries N-linked (GlcNAc...) asparagine glycosylation.

The protein belongs to the SUN family. Post-translationally, highly glycosylated.

The protein resides in the secreted. The protein localises to the cell wall. In terms of biological role, cell surface beta-glucosidase involved in cell wall biosynthesis and septation, and thus required for normal growth and correct hyphal morphogenesis. Has hydrolytic activity on linear (1-&gt;3)-beta-D-glucans such as laminaribiose and other laminarioligosaccharides. Also has a minor transferase activity. The sequence is that of Secreted beta-glucosidase sun1 (sun1) from Aspergillus fumigatus (strain ATCC MYA-4609 / CBS 101355 / FGSC A1100 / Af293) (Neosartorya fumigata).